The following is a 24-amino-acid chain: Pandinin-2 (24 aa).

In terms of assembly, homooligomer. In terms of tissue distribution, expressed by the venom gland.

It localises to the secreted. The protein localises to the target cell membrane. In terms of biological role, disrupts cell membranes through formation of pores. Has strong antimicrobial activity against Gram-positive bacteria B.subtilis, S.epidermidis, E.faecalis and S.aureus. Is less active against Gram-negative bacteria P.aeruginosa and E.coli. Also increases efficacy of antibiotics (ampicillin, chloramphenicol, streptomycin, kanamycin, novobiocin) when tested against E.coli, probably by facilitating their incorporation into the bacteria. Possesses antifungal activity against C.albicans and hemolytic activity against human, sheep and pig erythrocytes. The sequence is that of Pandinin-2 from Pandinus imperator (Emperor scorpion).